Consider the following 301-residue polypeptide: 5'-adenylylsulfate reductase-like 5 (301 aa).

The N-terminal stretch at 1–21 is a signal peptide; the sequence is MTRCAVVAAVAAVLLVAGAAA. One can recognise a Thioredoxin domain in the interval 51–164; sequence CIRIEPSPPV…LVDFYKETTG (114 aa). An N-linked (GlcNAc...) asparagine glycan is attached at N139. A helical transmembrane segment spans residues 201-221; the sequence is FVLLAVLFIILKVAAHFVPIV. An N-linked (GlcNAc...) asparagine glycan is attached at N268.

Its subcellular location is the membrane. The polypeptide is 5'-adenylylsulfate reductase-like 5 (APRL5) (Oryza sativa subsp. japonica (Rice)).